A 336-amino-acid polypeptide reads, in one-letter code: Dihydroorotate dehydrogenase (quinone) (336 aa).

Residues 62–66 (AGLDK) and Thr-86 each bind FMN. Position 66 (Lys-66) interacts with substrate. 111 to 115 (NRMGF) serves as a coordination point for substrate. The FMN site is built by Asn-139 and Asn-172. Residue Asn-172 participates in substrate binding. The active-site Nucleophile is the Ser-175. Position 177 (Asn-177) interacts with substrate. Residues Lys-217 and Thr-245 each contribute to the FMN site. Substrate is bound at residue 246–247 (NT). Residues Gly-268, Gly-297, and 318–319 (YS) each bind FMN.

Belongs to the dihydroorotate dehydrogenase family. Type 2 subfamily. Monomer. FMN serves as cofactor.

Its subcellular location is the cell membrane. The catalysed reaction is (S)-dihydroorotate + a quinone = orotate + a quinol. Its pathway is pyrimidine metabolism; UMP biosynthesis via de novo pathway; orotate from (S)-dihydroorotate (quinone route): step 1/1. Its function is as follows. Catalyzes the conversion of dihydroorotate to orotate with quinone as electron acceptor. This is Dihydroorotate dehydrogenase (quinone) from Pectobacterium carotovorum subsp. carotovorum (strain PC1).